The chain runs to 146 residues: Large ribosomal subunit protein uL15 (146 aa).

The segment at 1-54 (MTIKLHDLRPAPGSKTPRTRVGRGEGSKGKTAGRGTKGTKARKQVPTTFEGGQM) is disordered.

This sequence belongs to the universal ribosomal protein uL15 family. In terms of assembly, part of the 50S ribosomal subunit.

Functionally, binds to the 23S rRNA. This is Large ribosomal subunit protein uL15 from Mycobacterium ulcerans (strain Agy99).